Here is a 608-residue protein sequence, read N- to C-terminus: Threonine--tRNA ligase (608 aa).

Positions 1-143 (MRVLYIHAER…SFKPEEGRAD (143 aa)) are editing domain. Catalytic stretches follow at residues 194-490 (PKYL…PRLP) and 195-490 (KYLE…PRLP). Cys287, His338, and His459 together coordinate Zn(2+).

Belongs to the class-II aminoacyl-tRNA synthetase family. As to quaternary structure, homodimer. It depends on Zn(2+) as a cofactor.

The protein localises to the cytoplasm. The enzyme catalyses tRNA(Thr) + L-threonine + ATP = L-threonyl-tRNA(Thr) + AMP + diphosphate + H(+). Functionally, catalyzes the attachment of threonine to tRNA(Thr) in a two-step reaction: L-threonine is first activated by ATP to form Thr-AMP and then transferred to the acceptor end of tRNA(Thr). Also edits incorrectly charged L-seryl-tRNA(Thr). The protein is Threonine--tRNA ligase of Pyrobaculum aerophilum (strain ATCC 51768 / DSM 7523 / JCM 9630 / CIP 104966 / NBRC 100827 / IM2).